The primary structure comprises 468 residues: Protein CA_C1420 (468 aa).

The segment at 1-289 (MSLNGFYLLP…LKELERIRKD (289 aa)) is unknown. The AMMECR1 domain maps to 296–468 (QEKDPYVKLA…KFMVTRHKES (173 aa)).

This is Protein CA_C1420 from Clostridium acetobutylicum (strain ATCC 824 / DSM 792 / JCM 1419 / IAM 19013 / LMG 5710 / NBRC 13948 / NRRL B-527 / VKM B-1787 / 2291 / W).